A 348-amino-acid chain; its full sequence is RNA 3'-terminal phosphate cyclase (348 aa).

ATP-binding positions include Gln-107 and 290 to 294 (HLADQ). Residue His-316 is the Tele-AMP-histidine intermediate of the active site.

Belongs to the RNA 3'-terminal cyclase family. Type 1 subfamily.

It is found in the cytoplasm. The enzyme catalyses a 3'-end 3'-phospho-ribonucleotide-RNA + ATP = a 3'-end 2',3'-cyclophospho-ribonucleotide-RNA + AMP + diphosphate. Catalyzes the conversion of 3'-phosphate to a 2',3'-cyclic phosphodiester at the end of RNA. The mechanism of action of the enzyme occurs in 3 steps: (A) adenylation of the enzyme by ATP; (B) transfer of adenylate to an RNA-N3'P to produce RNA-N3'PP5'A; (C) and attack of the adjacent 2'-hydroxyl on the 3'-phosphorus in the diester linkage to produce the cyclic end product. The biological role of this enzyme is unknown but it is likely to function in some aspects of cellular RNA processing. This is RNA 3'-terminal phosphate cyclase from Nostoc punctiforme (strain ATCC 29133 / PCC 73102).